The following is a 509-amino-acid chain: Bestrophin-2a (509 aa).

At 1–31 the chain is on the cytoplasmic side; sequence MTVTYTARVANARFGGFSQLLLLWRGSIYKL. A10 lines the Ca(2+) pocket. The chain crosses the membrane as a helical span at residues 32 to 51; sequence LWRELLCFLGFYMALSAAYR. The Extracellular segment spans residues 52 to 60; it reads FVLTEGQKR. The chain crosses the membrane as a helical span at residues 61-82; it reads YFEKLVIYCDQYASLIPVSFVL. The Cytoplasmic portion of the chain corresponds to 83–238; the sequence is GFYVTLVVNR…WISVPLVYTQ (156 aa). A helical membrane pass occupies residues 239 to 255; sequence VVTIALYSYFLACLIGR. Residues 256 to 274 are Extracellular-facing; sequence QFLDPAQGYKDHDLDLCVP. Residues 275–288 traverse the membrane as a helical segment; it reads IFTLLQFFFYAGWL. The Cytoplasmic portion of the chain corresponds to 289 to 509; that stretch reads KVAEQLINPF…PIGEEEENLA (221 aa). The Ca(2+) site is built by Q293, N296, D301, and D304. The segment at 454–509 is disordered; it reads DPGLPEPEAPPPAGPEPLTLIPGPVEPFSIVTMPGPRGPAPPWLPSPIGEEEENLA. 2 stretches are compositionally biased toward pro residues: residues 457 to 468 and 489 to 498; these read LPEPEAPPPAGP and PRGPAPPWLP.

Belongs to the anion channel-forming bestrophin (TC 1.A.46) family. Calcium-sensitive chloride channel subfamily. In terms of assembly, pentamer. Interacts with GLUL; this interaction tethers a fraction of GLUL to the membrane, causing a decrease of cytosolic glutamine synthase (GS) activity and inhibits the chloride channel activity of BEST2 by affecting the gating at the aperture in the absence of intracellular glutamate. Mainly confined to the retinal pigment epithelium. Expressed in colon.

The protein localises to the cell membrane. It localises to the basolateral cell membrane. The catalysed reaction is chloride(in) = chloride(out). The enzyme catalyses hydrogencarbonate(in) = hydrogencarbonate(out). It catalyses the reaction L-glutamate(out) = L-glutamate(in). It carries out the reaction iodide(out) = iodide(in). The catalysed reaction is L-glutamine(out) = L-glutamine(in). With respect to regulation, chloride channel activity is allosterically inhibited by GLUL/glutamine synthase (GS) which affects the gating at the aperture in the absence of intracellular glutamate. Inhibitory effect of GLUL is relieved upon increasing of L-glutamate intracellular level. In terms of biological role, ligand-gated anion channel that allows the movement of anions across cell membranes when activated by calcium (Ca2+). Transports a large specter of anions, namely mediates the movement of chloride, L-glutamate and iodide. Calcium-binding triggers the dilation of the aperture, but calcium-dependent gating is only effective when the size of the passing anion is bigger than the closed aperture. Mediates the calcium-activated hydrogencarbonate movement and participates in colonic hydrogencarbonate secretion concomitant with mucin secretion. In non-pigmented epithelium (NPE), mediates the efflux of intracellular L-glutamate; binding of intracellular L-glutamate activates and open both the neck and the aperture of the channel, leading to L-glutamate exit promoting chloride influx movement from the extracellular side in trans. Also exhibits a directional permeability for intracellular glutamine, in a similar manner as for L-glutamate. The polypeptide is Bestrophin-2a (Homo sapiens (Human)).